The sequence spans 152 residues: Protein-export protein SecB (152 aa).

It belongs to the SecB family. Homotetramer, a dimer of dimers. One homotetramer interacts with 1 SecA dimer.

The protein localises to the cytoplasm. Functionally, one of the proteins required for the normal export of preproteins out of the cell cytoplasm. It is a molecular chaperone that binds to a subset of precursor proteins, maintaining them in a translocation-competent state. It also specifically binds to its receptor SecA. The protein is Protein-export protein SecB of Rickettsia typhi (strain ATCC VR-144 / Wilmington).